The chain runs to 131 residues: Profilin (131 aa).

It belongs to the profilin family. Occurs in many kinds of cells as a complex with monomeric actin in a 1:1 ratio.

Its subcellular location is the cytoplasm. The protein localises to the cytoskeleton. In terms of biological role, binds to actin and affects the structure of the cytoskeleton. At high concentrations, profilin prevents the polymerization of actin, whereas it enhances it at low concentrations. By binding to PIP2, it inhibits the formation of IP3 and DG. The sequence is that of Profilin from Citrus sinensis (Sweet orange).